A 618-amino-acid chain; its full sequence is Mitochondrial Rho GTPase 2 (618 aa).

The Cytoplasmic segment spans residues 1–592; sequence MRRDVRILLL…ELHPSSFWLR (592 aa). Residues 2-168 enclose the Miro 1 domain; sequence RRDVRILLLG…FYYAQKAVLH (167 aa). GTP is bound by residues G16, K17, T18, and S19. Residue T18 coordinates Mg(2+). 2 residues coordinate Mg(2+): P35 and D57. Residue S59 participates in GTP binding. Residue K96 forms a Glycyl lysine isopeptide (Lys-Gly) (interchain with G-Cter in ubiquitin) linkage. N118, K119, D121, A149, and K150 together coordinate GTP. A Glycyl lysine isopeptide (Lys-Gly) (interchain with G-Cter in ubiquitin) cross-link involves residue K119. Residue K164 forms a Glycyl lysine isopeptide (Lys-Gly) (interchain with G-Cter in ubiquitin) linkage. EF-hand domains lie at 184 to 219 and 304 to 339; these read ACAQ…CFGH and LGYQ…FPAA. Ca(2+)-binding residues include D197, D199, D201, E208, D317, D319, D321, and E328. Residues 414-576 enclose the Miro 2 domain; the sequence is RSVLLCKVVG…FTQLATMAAF (163 aa). The GTP site is built by G426, G428, K429, S430, and A431. G426, G428, K429, S430, and A431 together coordinate GDP. Residue S430 coordinates Mg(2+). E471 is a Mg(2+) binding site. GTP is bound by residues K525, D527, and C556. Residues K525, D527, and C556 each coordinate GDP. A helical; Anchor for type IV membrane protein membrane pass occupies residues 593-615; the sequence is GLLGVVGAAVAAVLSFSLYRVLV. Residues 616 to 618 are Mitochondrial intermembrane-facing; it reads KSQ.

The protein belongs to the mitochondrial Rho GTPase family. In terms of assembly, homodimer. Interacts with the kinesin-binding proteins TRAK1/OIP106 and TRAK2/GRIF1, forming a link between mitochondria and the trafficking apparatus of the microtubules. Interacts with ARMCX3. Found in a complex with KIF5B, OGT, RHOT1 and TRAK1. Post-translationally, ubiquitinated by PRKN in a PINK1-dependent manner, leading to its degradation. In terms of tissue distribution, ubiquitously expressed. Highly expressed in heart, liver, skeletal muscle, kidney and pancreas.

It localises to the mitochondrion outer membrane. The catalysed reaction is GTP + H2O = GDP + phosphate + H(+). It catalyses the reaction ATP + H2O = ADP + phosphate + H(+). The enzyme catalyses UTP + H2O = UDP + phosphate + H(+). Functionally, atypical mitochondrial nucleoside-triphosphatase (NTPase) involved in mitochondrial trafficking. Probably involved in control of anterograde transport of mitochondria and their subcellular distribution. Can hydrolyze GTP. Can hydrolyze ATP and UTP. The protein is Mitochondrial Rho GTPase 2 (RHOT2) of Homo sapiens (Human).